The following is a 191-amino-acid chain: Methylated-DNA--protein-cysteine methyltransferase (191 aa).

DNA-binding residues include Tyr120 and Arg134. The active-site Nucleophile; methyl group acceptor is Cys151.

Belongs to the MGMT family.

The protein resides in the nucleus. It carries out the reaction a 6-O-methyl-2'-deoxyguanosine in DNA + L-cysteinyl-[protein] = S-methyl-L-cysteinyl-[protein] + a 2'-deoxyguanosine in DNA. The catalysed reaction is a 4-O-methyl-thymidine in DNA + L-cysteinyl-[protein] = a thymidine in DNA + S-methyl-L-cysteinyl-[protein]. Involved in the cellular defense against the biological effects of O6-methylguanine (O6-MeG) and O4-methylthymine (O4-MeT) in DNA. Repairs the methylated nucleobase in DNA by stoichiometrically transferring the methyl group to a cysteine residue in the enzyme. This is a suicide reaction: the enzyme is irreversibly inactivated. The protein is Methylated-DNA--protein-cysteine methyltransferase (MGT1) of Debaryomyces hansenii (strain ATCC 36239 / CBS 767 / BCRC 21394 / JCM 1990 / NBRC 0083 / IGC 2968) (Yeast).